A 238-amino-acid polypeptide reads, in one-letter code: Polynucleotide 3'-phosphatase (238 aa).

Belongs to the DNA 3' phosphatase family.

It is found in the nucleus. The catalysed reaction is a 3'end (2'-deoxyribonucleotide 3'-phosphate)-DNA + H2O = a 3'-end 2'-deoxyribonucleotide-DNA + phosphate. Functionally, dephosphorylate DNA's 3'-phosphate termini. Has a role in the repair of breaks in single-stranded DNA. This chain is Polynucleotide 3'-phosphatase (TPP1), found in Saccharomyces cerevisiae (strain ATCC 204508 / S288c) (Baker's yeast).